Reading from the N-terminus, the 306-residue chain is Polyisoprenyl-teichoic acid--peptidoglycan teichoic acid transferase TagU (306 aa).

Topologically, residues 1–11 are cytoplasmic; sequence MRAEKRKKKKK. The helical; Signal-anchor for type II membrane protein transmembrane segment at 12-32 threads the bilayer; it reads ILYTIIALIGIFVLSTGSYAY. Residues 33 to 306 are Extracellular-facing; the sequence is YLWHKAASTV…TAELKESLNK (274 aa).

Belongs to the LytR/CpsA/Psr (LCP) family.

The protein localises to the cell membrane. It participates in cell wall biogenesis. Its function is as follows. May catalyze the final step in cell wall teichoic acid biosynthesis, the transfer of the anionic cell wall polymers (APs) from their lipid-linked precursor to the cell wall peptidoglycan (PG). The sequence is that of Polyisoprenyl-teichoic acid--peptidoglycan teichoic acid transferase TagU from Bacillus licheniformis (strain ATCC 14580 / DSM 13 / JCM 2505 / CCUG 7422 / NBRC 12200 / NCIMB 9375 / NCTC 10341 / NRRL NRS-1264 / Gibson 46).